A 201-amino-acid polypeptide reads, in one-letter code: LexA repressor 1 (201 aa).

A DNA-binding region (H-T-H motif) is located at residues 28–48 (LREIAAHLKISGTLGVSKHLE). Active-site for autocatalytic cleavage activity residues include Ser-120 and Lys-157.

This sequence belongs to the peptidase S24 family. In terms of assembly, homodimer.

It catalyses the reaction Hydrolysis of Ala-|-Gly bond in repressor LexA.. In terms of biological role, represses a number of genes involved in the response to DNA damage (SOS response), including recA and lexA. In the presence of single-stranded DNA, RecA interacts with LexA causing an autocatalytic cleavage which disrupts the DNA-binding part of LexA, leading to derepression of the SOS regulon and eventually DNA repair. This is LexA repressor 1 from Geobacter sulfurreducens (strain ATCC 51573 / DSM 12127 / PCA).